A 292-amino-acid chain; its full sequence is Intermediate transcription factor 3 small subunit (292 aa).

It belongs to the orthopoxvirus OPG134 family. In terms of assembly, heterodimer of a 45 kDa (A23R) and a 32 kDa (A8R) subunit to form the virus intermediate transcription factor (VITF)-3.

In terms of biological role, acts with RNA polymerase to initiate transcription from intermediate gene promoters. The chain is Intermediate transcription factor 3 small subunit (OPG134) from Monkeypox virus.